Here is a 251-residue protein sequence, read N- to C-terminus: Triosephosphate isomerase (251 aa).

9–11 (NWK) contributes to the substrate binding site. H95 functions as the Electrophile in the catalytic mechanism. E167 (proton acceptor) is an active-site residue. Substrate is bound by residues G173, S212, and 233-234 (GG).

Belongs to the triosephosphate isomerase family. Homodimer.

Its subcellular location is the cytoplasm. The enzyme catalyses D-glyceraldehyde 3-phosphate = dihydroxyacetone phosphate. Its pathway is carbohydrate biosynthesis; gluconeogenesis. It participates in carbohydrate degradation; glycolysis; D-glyceraldehyde 3-phosphate from glycerone phosphate: step 1/1. In terms of biological role, involved in the gluconeogenesis. Catalyzes stereospecifically the conversion of dihydroxyacetone phosphate (DHAP) to D-glyceraldehyde-3-phosphate (G3P). The chain is Triosephosphate isomerase from Pseudomonas fluorescens (strain Pf0-1).